We begin with the raw amino-acid sequence, 355 residues long: Peptide chain release factor 1 (355 aa).

At Gln-234 the chain carries N5-methylglutamine.

Belongs to the prokaryotic/mitochondrial release factor family. Methylated by PrmC. Methylation increases the termination efficiency of RF1.

Its subcellular location is the cytoplasm. Its function is as follows. Peptide chain release factor 1 directs the termination of translation in response to the peptide chain termination codons UAG and UAA. The polypeptide is Peptide chain release factor 1 (Metamycoplasma arthritidis (strain 158L3-1) (Mycoplasma arthritidis)).